Consider the following 401-residue polypeptide: Glutamyl-tRNA reductase (401 aa).

Residues 45 to 48 (TCNR), S101, 106 to 108 (EDQ), and Q112 each bind substrate. The Nucleophile role is filled by C46. NADP(+) is bound at residue 177-182 (GYGDVG).

The protein belongs to the glutamyl-tRNA reductase family. In terms of assembly, homodimer.

It carries out the reaction (S)-4-amino-5-oxopentanoate + tRNA(Glu) + NADP(+) = L-glutamyl-tRNA(Glu) + NADPH + H(+). It functions in the pathway porphyrin-containing compound metabolism; protoporphyrin-IX biosynthesis; 5-aminolevulinate from L-glutamyl-tRNA(Glu): step 1/2. Its function is as follows. Catalyzes the NADPH-dependent reduction of glutamyl-tRNA(Glu) to glutamate 1-semialdehyde (GSA). The chain is Glutamyl-tRNA reductase from Clostridium botulinum (strain Alaska E43 / Type E3).